Consider the following 88-residue polypeptide: Small ribosomal subunit protein uS17 (88 aa).

Belongs to the universal ribosomal protein uS17 family. As to quaternary structure, part of the 30S ribosomal subunit.

Its function is as follows. One of the primary rRNA binding proteins, it binds specifically to the 5'-end of 16S ribosomal RNA. The chain is Small ribosomal subunit protein uS17 from Lactobacillus delbrueckii subsp. bulgaricus (strain ATCC 11842 / DSM 20081 / BCRC 10696 / JCM 1002 / NBRC 13953 / NCIMB 11778 / NCTC 12712 / WDCM 00102 / Lb 14).